Reading from the N-terminus, the 370-residue chain is NSFL1 cofactor p47 (370 aa).

Residues Ser54–Thr73 are disordered. A phosphoserine mark is found at Ser74, Ser102, and Ser114. 2 disordered regions span residues His80–Asn116 and Thr138–Leu157. Residues Pro109–Pro115 carry the Nuclear localization signal motif. Ser140 is subject to Phosphoserine; by CDK1. Tyr167 is subject to Phosphotyrosine. The short motif at Arg172–His175 is the Nuclear localization signal element. A phosphoserine mark is found at Ser176, Ser192, and Ser272. The 66-residue stretch at Asp179 to Val244 folds into the SEP domain. One can recognise a UBX domain in the interval Glu291 to Arg368.

This sequence belongs to the NSFL1C family. In terms of assembly, part of a ternary complex containing STX5A, NSFL1C and VCP. NSFL1C forms a homotrimer that binds to one end of a VCP homohexamer. The complex binds to membranes enriched in phosphatidylethanolamine-containing lipids and promotes Golgi membrane fusion. Interaction with VCIP135 leads to dissociation of the complex via ATP hydrolysis by VCP. Binds ubiquitin and mono-ubiquitinated proteins via its N-terminal UBA-like domain when bound to VCP. Phosphorylated during mitosis. Phosphorylation inhibits interaction with Golgi membranes and is required for the fragmentation of the Golgi stacks during mitosis. Highly expressed in heart, brain, spleen, lung, liver, muscle, kidney and testis.

The protein resides in the nucleus. The protein localises to the golgi apparatus. It is found in the golgi stack. It localises to the chromosome. Its subcellular location is the cytoplasm. The protein resides in the cytoskeleton. The protein localises to the microtubule organizing center. It is found in the centrosome. In terms of biological role, reduces the ATPase activity of VCP. Necessary for the fragmentation of Golgi stacks during mitosis and for VCP-mediated reassembly of Golgi stacks after mitosis. May play a role in VCP-mediated formation of transitional endoplasmic reticulum (tER). Inhibits the activity of CTSL (in vitro). Together with UBXN2B/p37, regulates the centrosomal levels of kinase AURKA/Aurora A during mitotic progression by promoting AURKA removal from centrosomes in prophase. Also, regulates spindle orientation during mitosis. The protein is NSFL1 cofactor p47 (Nsfl1c) of Rattus norvegicus (Rat).